Reading from the N-terminus, the 228-residue chain is RNA chaperone ProQ (228 aa).

Residues 107–178 form a disordered region; that stretch reads KARVQAQRAE…REEKHTPVSD (72 aa). Basic and acidic residues-rich tracts occupy residues 117-136 and 146-175; these read QQAK…DAPR and RRKE…KHTP.

Belongs to the ProQ family.

It localises to the cytoplasm. Functionally, RNA chaperone with significant RNA binding, RNA strand exchange and RNA duplexing activities. May regulate ProP activity through an RNA-based, post-transcriptional mechanism. The chain is RNA chaperone ProQ from Salmonella agona (strain SL483).